A 66-amino-acid chain; its full sequence is Probable cytochrome b-c1 complex subunit 9 (66 aa).

Residues 1–20 lie on the Mitochondrial matrix side of the membrane; that stretch reads MSNALTNIFYKYVARRNSTW. A helical membrane pass occupies residues 21–46; it reads MAGAILGAFVLDSTVSGAVNTFFDSV. Residues 47 to 66 are Mitochondrial intermembrane-facing; the sequence is NKGKLWKDVYAERVKKGISQ.

This sequence belongs to the UQCR10/QCR9 family. As to quaternary structure, component of the ubiquinol-cytochrome c oxidoreductase (cytochrome b-c1 complex, complex III, CIII), a multisubunit enzyme composed of 3 respiratory subunits cytochrome b, cytochrome c1 and Rieske protein, 2 core protein subunits, and additional low-molecular weight protein subunits. The complex exists as an obligatory dimer and forms supercomplexes (SCs) in the inner mitochondrial membrane with cytochrome c oxidase (complex IV, CIV).

It is found in the mitochondrion inner membrane. In terms of biological role, component of the ubiquinol-cytochrome c oxidoreductase, a multisubunit transmembrane complex that is part of the mitochondrial electron transport chain which drives oxidative phosphorylation. The respiratory chain contains 3 multisubunit complexes succinate dehydrogenase (complex II, CII), ubiquinol-cytochrome c oxidoreductase (cytochrome b-c1 complex, complex III, CIII) and cytochrome c oxidase (complex IV, CIV), that cooperate to transfer electrons derived from NADH and succinate to molecular oxygen, creating an electrochemical gradient over the inner membrane that drives transmembrane transport and the ATP synthase. The cytochrome b-c1 complex catalyzes electron transfer from ubiquinol to cytochrome c, linking this redox reaction to translocation of protons across the mitochondrial inner membrane, with protons being carried across the membrane as hydrogens on the quinol. In the process called Q cycle, 2 protons are consumed from the matrix, 4 protons are released into the intermembrane space and 2 electrons are passed to cytochrome c. In Dictyostelium discoideum (Social amoeba), this protein is Probable cytochrome b-c1 complex subunit 9.